A 500-amino-acid polypeptide reads, in one-letter code: NAD(P)H-quinone oxidoreductase chain 4, chloroplastic (500 aa).

14 consecutive transmembrane segments (helical) span residues 3-23, 37-57, 87-107, 113-130, 134-154, 167-187, 208-228, 242-262, 272-292, 305-325, 330-350, 386-406, 416-436, and 462-482; these read FFPW…LIFF, ICIC…HFQL, IGPI…AWPI, LFHF…GSFS, LLLF…LLSM, FILY…GMGL, ALEI…SPII, HYST…YGLV, AHSI…IYAA, IAYS…SITD, GAVL…FLAG, LALP…GIIT, ILIT…SLSM, and LFVS…PDFV.

Belongs to the complex I subunit 4 family.

The protein localises to the plastid. Its subcellular location is the chloroplast thylakoid membrane. It carries out the reaction a plastoquinone + NADH + (n+1) H(+)(in) = a plastoquinol + NAD(+) + n H(+)(out). The enzyme catalyses a plastoquinone + NADPH + (n+1) H(+)(in) = a plastoquinol + NADP(+) + n H(+)(out). This chain is NAD(P)H-quinone oxidoreductase chain 4, chloroplastic, found in Platanus occidentalis (Sycamore).